Here is a 729-residue protein sequence, read N- to C-terminus: MLYQGESLYLNWLEDGIAELVFSAPGSVNTLDTRTVASLGKALDVLAEQPNLKGLLLRSDKPAFIVGADITEFLSLFAAPAEKLHEWLVFANSIFNRLEDLPVPTLSAINSYALGGGCECVLATDFRLATPDARIGLPETKLGIMPGFGGTVRLPRLLGADSALEIIAAGKDVSAADALKVGLVQAVVANEKLIPAAIKMLKQAINGELDWLGYRRPKLEALKLNKIEAMMSFTTAKAMVLQTAGKHYPAPMLAVKTIEAAATMTRDEALQLETQHFVQLARSNEARALVGIFLNDQYVKGKAKKLVGETPVPQQAAVLGAGIMGGGIAYQSAFKGVPIRMKDINEKPLALGMNEAAKLLNKQMERGKLDGMKMATILANIHPTLDYAGFERTDIVVEAVVENPKIKASVLAETESHISESTILASNTSTIPIAVLAAALKRPQNFCGMHFFNPVHRMPLVEIIRGPKTSDSTIASVVAYASKMGKTPIVVNDCPGFFVNRVLFPYFAAFSLLLRDGADFREIDNAMEKKFGWPMGPAYLLDVVGIDTAHHAQAVMAEGFPQRMAKDYRDAIDVLFEHQRFGQKNGQGFYRYQTDSKGKQRKEQDDAVDALLKNISQPKKAFSAEEIIARMMIPMINEVARCLEEGIVASPAEADMALVYGLGFPPFHGGACRYLDTLGSERYVEMAQQLAHLGAIYQVPDGLQQKARSNEGYYPSVAPHADVSHGQPA.

An enoyl-CoA hydratase/isomerase region spans residues 1-189; sequence MLYQGESLYL…KVGLVQAVVA (189 aa). Residue Asp-296 participates in substrate binding. The interval 311–729 is 3-hydroxyacyl-CoA dehydrogenase; the sequence is PVPQQAAVLG…HADVSHGQPA (419 aa). NAD(+) is bound by residues Met-324, Asp-343, 400–402, Lys-407, and Ser-429; that span reads VVE. The active-site For 3-hydroxyacyl-CoA dehydrogenase activity is the His-450. Asn-453 contacts NAD(+). Asn-500 and Tyr-660 together coordinate substrate.

In the N-terminal section; belongs to the enoyl-CoA hydratase/isomerase family. This sequence in the C-terminal section; belongs to the 3-hydroxyacyl-CoA dehydrogenase family. As to quaternary structure, heterotetramer of two alpha chains (FadB) and two beta chains (FadA).

The enzyme catalyses a (3S)-3-hydroxyacyl-CoA + NAD(+) = a 3-oxoacyl-CoA + NADH + H(+). It carries out the reaction a (3S)-3-hydroxyacyl-CoA = a (2E)-enoyl-CoA + H2O. It catalyses the reaction a 4-saturated-(3S)-3-hydroxyacyl-CoA = a (3E)-enoyl-CoA + H2O. The catalysed reaction is (3S)-3-hydroxybutanoyl-CoA = (3R)-3-hydroxybutanoyl-CoA. The enzyme catalyses a (3Z)-enoyl-CoA = a 4-saturated (2E)-enoyl-CoA. It carries out the reaction a (3E)-enoyl-CoA = a 4-saturated (2E)-enoyl-CoA. It participates in lipid metabolism; fatty acid beta-oxidation. Functionally, involved in the aerobic and anaerobic degradation of long-chain fatty acids via beta-oxidation cycle. Catalyzes the formation of 3-oxoacyl-CoA from enoyl-CoA via L-3-hydroxyacyl-CoA. It can also use D-3-hydroxyacyl-CoA and cis-3-enoyl-CoA as substrate. This Pectobacterium atrosepticum (strain SCRI 1043 / ATCC BAA-672) (Erwinia carotovora subsp. atroseptica) protein is Fatty acid oxidation complex subunit alpha.